We begin with the raw amino-acid sequence, 266 residues long: Single-stranded DNA-binding protein WHY1, chloroplastic (266 aa).

Residues 1 to 37 constitute a chloroplast transit peptide; the sequence is MPPPAPLFLSLASTPPPALMPVHHPRAPQSLTLVPPV. Residues 53-81 form a disordered region; it reads SPRHSDYFDPRAPPPPRGDGGYGRPPNGA. The interval 94 to 99 is required for ssDNA binding; that stretch reads KGKAAL. Residues 172–185 carry the Nuclear localization signal motif; it reads KGRSEEGKVRKVLK.

The protein belongs to the Whirly family. Homotetramer.

It is found in the plastid. It localises to the chloroplast stroma. The protein resides in the nucleus. Single-stranded DNA and RNA binding protein that maintains plastid genome stability by preventing break-induced and short homology-dependent illegitimate recombinations. Functions in RNA metabolism and is involved in the maturation of the atpF and 23S ribosomal RNAs. This chain is Single-stranded DNA-binding protein WHY1, chloroplastic (WHY1), found in Zea mays (Maize).